We begin with the raw amino-acid sequence, 376 residues long: Lipoyl synthase 2, mitochondrial (376 aa).

Residues cysteine 109, cysteine 114, cysteine 120, cysteine 140, cysteine 144, cysteine 147, and serine 356 each coordinate [4Fe-4S] cluster. Residues 125-345 (ETGTATATIM…QTLGMEMGFR (221 aa)) form the Radical SAM core domain.

It belongs to the radical SAM superfamily. Lipoyl synthase family. The cofactor is [4Fe-4S] cluster.

It localises to the mitochondrion. The catalysed reaction is [[Fe-S] cluster scaffold protein carrying a second [4Fe-4S](2+) cluster] + N(6)-octanoyl-L-lysyl-[protein] + 2 oxidized [2Fe-2S]-[ferredoxin] + 2 S-adenosyl-L-methionine + 4 H(+) = [[Fe-S] cluster scaffold protein] + N(6)-[(R)-dihydrolipoyl]-L-lysyl-[protein] + 4 Fe(3+) + 2 hydrogen sulfide + 2 5'-deoxyadenosine + 2 L-methionine + 2 reduced [2Fe-2S]-[ferredoxin]. It participates in protein modification; protein lipoylation via endogenous pathway; protein N(6)-(lipoyl)lysine from octanoyl-[acyl-carrier-protein]: step 2/2. Its function is as follows. Catalyzes the radical-mediated insertion of two sulfur atoms into the C-6 and C-8 positions of the octanoyl moiety bound to the lipoyl domains of lipoate-dependent enzymes, thereby converting the octanoylated domains into lipoylated derivatives. The protein is Lipoyl synthase 2, mitochondrial of Pisum sativum (Garden pea).